The primary structure comprises 164 residues: Cyclic pyranopterin monophosphate synthase (164 aa).

Substrate is bound by residues 75–77 (MCH) and 116–117 (ME). The active site involves aspartate 131.

This sequence belongs to the MoaC family. As to quaternary structure, homohexamer; trimer of dimers.

The catalysed reaction is (8S)-3',8-cyclo-7,8-dihydroguanosine 5'-triphosphate = cyclic pyranopterin phosphate + diphosphate. It functions in the pathway cofactor biosynthesis; molybdopterin biosynthesis. Catalyzes the conversion of (8S)-3',8-cyclo-7,8-dihydroguanosine 5'-triphosphate to cyclic pyranopterin monophosphate (cPMP). This Staphylococcus aureus (strain USA300) protein is Cyclic pyranopterin monophosphate synthase.